The following is a 477-amino-acid chain: Glycogen synthase (477 aa).

Lys15 serves as a coordination point for ADP-alpha-D-glucose.

This sequence belongs to the glycosyltransferase 1 family. Bacterial/plant glycogen synthase subfamily.

The enzyme catalyses [(1-&gt;4)-alpha-D-glucosyl](n) + ADP-alpha-D-glucose = [(1-&gt;4)-alpha-D-glucosyl](n+1) + ADP + H(+). It functions in the pathway glycan biosynthesis; glycogen biosynthesis. Functionally, synthesizes alpha-1,4-glucan chains using ADP-glucose. This is Glycogen synthase from Anaeromyxobacter dehalogenans (strain 2CP-1 / ATCC BAA-258).